We begin with the raw amino-acid sequence, 170 residues long: Translationally-controlled tumor protein homolog (170 aa).

A TCTP domain is found at methionine 1 to valine 170.

Belongs to the TCTP family.

It is found in the cytoplasm. It localises to the cytoskeleton. In terms of biological role, involved in protein synthesis. Involved in microtubule stabilization. The polypeptide is Translationally-controlled tumor protein homolog (Neurospora crassa (strain ATCC 24698 / 74-OR23-1A / CBS 708.71 / DSM 1257 / FGSC 987)).